Consider the following 180-residue polypeptide: PLASMODESMATA CALLOSE-BINDING PROTEIN 5 (180 aa).

The first 29 residues, 1–29, serve as a signal peptide directing secretion; it reads MIMSLPQCSHLRLSILAATAAMLMVITTA. The cysteines at positions 42 and 105 are disulfide-linked. The segment at 126–151 is disordered; it reads PSSKGANNGRLADDTSMGAGQADMSR. S157 carries GPI-anchor amidated serine lipidation. Residues 158–180 constitute a propeptide, removed in mature form; it reads SSWMVTFIGFGSLLTMTWIIHHL.

In terms of processing, contains two additional disulfide bonds.

The protein resides in the cell membrane. It localises to the cell junction. The protein localises to the plasmodesma. This Arabidopsis thaliana (Mouse-ear cress) protein is PLASMODESMATA CALLOSE-BINDING PROTEIN 5 (PDCB5).